The primary structure comprises 108 residues: NADH dehydrogenase [ubiquinone] 1 alpha subcomplex subunit 8-A (108 aa).

2 consecutive CHCH domains span residues 28–69 (GIRC…LKDL) and 70–108 (HQRC…CPLK). Short sequence motifs (cx9C motif) lie at residues 31 to 41 (CMPENMAFLKC), 51 to 61 (CLEKGRDVTRC), and 73 to 83 (CPKEMDAYVGC). Cystine bridges form between Cys-31/Cys-61, Cys-41/Cys-51, Cys-73/Cys-105, and Cys-83/Cys-94. Residues 94–105 (CRKEQEAFEKVC) carry the Cx10C motif motif.

It belongs to the complex I NDUFA8 subunit family. Complex I is composed of at least 49 different subunits.

The protein resides in the mitochondrion. It localises to the mitochondrion intermembrane space. Functionally, accessory subunit of the mitochondrial membrane respiratory chain NADH dehydrogenase (Complex I), that is believed not to be involved in catalysis. Complex I functions in the transfer of electrons from NADH to the respiratory chain. The immediate electron acceptor for the enzyme is believed to be ubiquinone. The protein is NADH dehydrogenase [ubiquinone] 1 alpha subcomplex subunit 8-A of Arabidopsis thaliana (Mouse-ear cress).